The primary structure comprises 600 residues: Molybdenum cofactor biosynthesis protein moc-5 (600 aa).

Positions Arg-4–Ala-371 are molybdenum cofactor biosynthesis protein A. The 217-residue stretch at Met-68–Arg-284 folds into the Radical SAM core domain. Arg-77 contacts GTP. Residues Cys-84 and Cys-88 each coordinate [4Fe-4S] cluster. Tyr-90 contacts S-adenosyl-L-methionine. Cys-91 is a binding site for [4Fe-4S] cluster. Arg-127 serves as a coordination point for GTP. Gly-131 lines the S-adenosyl-L-methionine pocket. Thr-158 provides a ligand contact to GTP. Ser-182 contributes to the S-adenosyl-L-methionine binding site. A GTP-binding site is contributed by Lys-218. Met-252 contributes to the S-adenosyl-L-methionine binding site. [4Fe-4S] cluster-binding residues include Cys-316 and Cys-319. Arg-321–Arg-323 contacts GTP. Cys-333 contacts [4Fe-4S] cluster. The tract at residues Arg-369–Arg-390 is disordered. A molybdenum cofactor biosynthesis protein C region spans residues Thr-396–Asp-595. Asp-566 acts as the For molybdenum cofactor biosynthesis protein C activity in catalysis.

In the C-terminal section; belongs to the MoaC family. The protein in the N-terminal section; belongs to the radical SAM superfamily. MoaA family. In terms of assembly, isoform a and isoform b probably form a heterooligomer. It depends on [4Fe-4S] cluster as a cofactor.

It catalyses the reaction GTP + AH2 + S-adenosyl-L-methionine = (8S)-3',8-cyclo-7,8-dihydroguanosine 5'-triphosphate + 5'-deoxyadenosine + L-methionine + A + H(+). The catalysed reaction is (8S)-3',8-cyclo-7,8-dihydroguanosine 5'-triphosphate = cyclic pyranopterin phosphate + diphosphate. It functions in the pathway cofactor biosynthesis; molybdopterin biosynthesis. Functionally, probably forms a complex with isoform b that catalyzes the conversion of 5'-GTP to cyclic pyranopterin monophosphate (cPMP). Catalyzes the cyclization of GTP to (8S)-3',8-cyclo-7,8-dihydroguanosine 5'-triphosphate and mocs1b catalyzes the subsequent conversion of (8S)-3',8-cyclo-7,8-dihydroguanosine 5'-triphosphate to cPMP. Its function is as follows. Probably forms a complex with isoform a that catalyzes the conversion of 5'-GTP to cyclic pyranopterin monophosphate (cPMP). The chain is Molybdenum cofactor biosynthesis protein moc-5 from Caenorhabditis elegans.